Reading from the N-terminus, the 429-residue chain is Adenylosuccinate synthetase (429 aa).

GTP is bound by residues 12–18 and 40–42; these read GDEGKGK and GHT. The Proton acceptor role is filled by Asp13. Residues Asp13 and Gly40 each contribute to the Mg(2+) site. Residues 13 to 16, 38 to 41, Thr128, Arg142, Gln223, Thr238, and Arg302 contribute to the IMP site; these read DEGK and NAGH. His41 functions as the Proton donor in the catalytic mechanism. 298 to 304 lines the substrate pocket; that stretch reads TTTGRPR. GTP contacts are provided by residues Arg304, 330 to 332, and 412 to 414; these read SID and SVG.

This sequence belongs to the adenylosuccinate synthetase family. In terms of assembly, homodimer. Requires Mg(2+) as cofactor.

Its subcellular location is the cytoplasm. It carries out the reaction IMP + L-aspartate + GTP = N(6)-(1,2-dicarboxyethyl)-AMP + GDP + phosphate + 2 H(+). It participates in purine metabolism; AMP biosynthesis via de novo pathway; AMP from IMP: step 1/2. Its function is as follows. Plays an important role in the de novo pathway of purine nucleotide biosynthesis. Catalyzes the first committed step in the biosynthesis of AMP from IMP. This Bacillus cytotoxicus (strain DSM 22905 / CIP 110041 / 391-98 / NVH 391-98) protein is Adenylosuccinate synthetase.